The chain runs to 567 residues: Zinc finger protein 512 (567 aa).

The tract at residues 1–34 (MSSRLGAVPATPGPTPFKQQRSTRIVGAKNSRTQ) is disordered. Residues K18 and K84 each participate in a glycyl lysine isopeptide (Lys-Gly) (interchain with G-Cter in SUMO2) cross-link. Residues 87 to 148 (AASHVEGPGG…QTRRIRKEPP (62 aa)) form a disordered region. The span at 119–130 (KKHKLYGRKQRP) shows a compositional bias: basic residues. A C2H2-type 1 zinc finger spans residues 197-220 (FTCHHCGKQLRSLAGMKYHVMANH). K227 participates in a covalent cross-link: Glycyl lysine isopeptide (Lys-Gly) (interchain with G-Cter in SUMO2). The segment at 287–310 (LKCHHCGKPYRSKAGLAYHLRSEH) adopts a C2H2-type 2 zinc-finger fold. K333 participates in a covalent cross-link: Glycyl lysine isopeptide (Lys-Gly) (interchain with G-Cter in SUMO2). A C2H2-type 3; atypical zinc finger spans residues 406 to 430 (IQCPNQGCEAVYSSVSGLKAHLGSC). A C2H2-type 3 zinc finger spans residues 440–463 (YKCLLCQKEFVSESGVKYHINSVH). Over residues 485 to 494 (KQRQQEEEKR) the composition is skewed to basic and acidic residues. The tract at residues 485 to 567 (KQRQQEEEKR…PKTNHKRGKK (83 aa)) is disordered. A compositionally biased stretch (basic residues) spans 495–508 (RQQHRSRRSLRRRQ). Basic and acidic residues predominate over residues 523 to 544 (VGKDQRRNHEELLVATSRKEPE). The span at 556 to 567 (RSPKTNHKRGKK) shows a compositional bias: basic residues.

It belongs to the krueppel C2H2-type zinc-finger protein family.

Its subcellular location is the nucleus. Functionally, may be involved in transcriptional regulation. This is Zinc finger protein 512 (ZNF512) from Bos taurus (Bovine).